The sequence spans 229 residues: Choline-phosphate cytidylyltransferase (229 aa).

CDP-choline is bound by residues leucine 6, alanine 8, glycine 9, tyrosine 80, asparagine 82, serine 85, and alanine 101. Aspartate 102 is a Mg(2+) binding site. Tyrosine 185 is a CDP-choline binding site. Mg(2+)-binding residues include glutamate 211 and aspartate 213.

This sequence belongs to the LicC/PntC cytidylyltransferase family. In terms of assembly, monomer. Forms dimers in LicC-CDP-Cho-Mg(2+) crystals, but the monomer is probably the biologically functional unit. Mg(2+) is required as a cofactor.

The enzyme catalyses phosphocholine + CTP + H(+) = CDP-choline + diphosphate. The protein operates within cell wall biogenesis; teichoic acid biosynthesis. It participates in cell wall biogenesis; lipoteichoic acid biosynthesis. Its activity is regulated as follows. Mg(2+) in slight excess of CTP gives maximal activity. Strongly inhibited by Ca(2+) and several other metal ions, such as Cd(2+), Co(2+), Cu(2+), Mn(2+), Ni(2+), Zn(2+) and Fe(2+). Also inhibited by Mg(2+) at high concentrations. CDP-Cho is a competitive inhibitor with respect to CTP, whereas diphosphate is a mixed-type inhibitor with respect to CTP. Its function is as follows. Cytidylyltransferase involved in the biosynthesis of the phosphocholine containing cell wall constituents, teichoic acid and lipoteichoic acid, which are essential for cell separation and pathogenesis. Catalyzes the activation of phosphocholine (P-Cho) to CDP-choline (CDP-Cho). Can also use phosphoethanolamine and 2-aminoethylphosphonate, with much lower efficiency. Shows lower activity with dCTP, weak activity with ATP and no activity with GTP, TTP, UTP, dATP, dGTP and dTTP. The protein is Choline-phosphate cytidylyltransferase of Streptococcus pneumoniae (strain ATCC BAA-255 / R6).